The chain runs to 341 residues: Processive diacylglycerol beta-glycosyltransferase (341 aa).

This sequence belongs to the glycosyltransferase 2 family. Mg(2+) serves as cofactor.

It is found in the cell membrane. It carries out the reaction a 1,2-diacyl-sn-glycerol + UDP-alpha-D-glucose = a 1,2-diacyl-3-O-(beta-D-glucopyranosyl)-sn-glycerol + UDP + H(+). It catalyses the reaction a 1,2-diacyl-sn-glycerol + UDP-alpha-D-galactose = a 1,2-diacyl-3-O-(beta-D-galactosyl)-sn-glycerol + UDP + H(+). The catalysed reaction is a 1,2-diacyl-3-O-(beta-D-glucopyranosyl)-sn-glycerol + UDP-alpha-D-glucose = a 1,2-diacyl-3-O-(beta-D-Glc-(1-&gt;6)-beta-D-Glc)-sn-glycerol + UDP + H(+). The enzyme catalyses a 1,2-diacyl-3-O-(beta-D-galactosyl)-sn-glycerol + UDP-alpha-D-galactose = a 1,2-diacyl-3-O-[beta-D-galactosyl-(1-&gt;6)-beta-D-galactosyl]-sn-glycerol + UDP + H(+). Its pathway is glycolipid metabolism; diglucosyl-diacylglycerol biosynthesis. Activated by the negatively charged lipid dioleoylphosphatidylglycerol (DOPG) and inhibited by N-(n-nonyl)deoxygalactonojirimycin (C9J). Functionally, processive glycosyltransferase involved in the biosynthesis of both the non-bilayer-prone beta-monoglycosyldiacylglycerol and the bilayer-forming membrane lipid beta-diglycosyldiacylglycerol. These components contribute to regulate the properties and stability of the membrane. Catalyzes sequentially the transfers of glucosyl or galactosyl residues from UDP-Glc or UDP-Gal to diacylglycerol (DAG) acceptor to form the corresponding beta-glycosyl-DAG (3-O-(beta-D-glycopyranosyl)-1,2-diacyl-sn-glycerol), which then acts as acceptor to give beta-diglycosyl-DAG product (3-O-(beta-D-glycopyranosyl-beta-(1-&gt;6)-D-glycopyranosyl)-1,2-diacyl-sn-glycerol). Dioleoylglycerol (DOG) is a preferred sugar acceptor than 3-O-(beta-D-glucopyranosyl)-1,2-dioleoyl-sn-glycerol. This is Processive diacylglycerol beta-glycosyltransferase from Mycoplasma genitalium (strain ATCC 33530 / DSM 19775 / NCTC 10195 / G37) (Mycoplasmoides genitalium).